Consider the following 39-residue polypeptide: Photosystem II reaction center protein L (39 aa).

Residues 18 to 38 (SLYLGLLFVFVTGVLMSSYFF) traverse the membrane as a helical segment.

The protein belongs to the PsbL family. PSII is composed of 1 copy each of membrane proteins PsbA, PsbB, PsbC, PsbD, PsbE, PsbF, PsbH, PsbI, PsbJ, PsbK, PsbL, PsbM, PsbT, PsbX, PsbY, PsbZ, Psb30/Ycf12, peripheral proteins PsbO, CyanoQ (PsbQ), PsbU, PsbV and a large number of cofactors. It forms dimeric complexes.

It is found in the cellular thylakoid membrane. Functionally, one of the components of the core complex of photosystem II (PSII). PSII is a light-driven water:plastoquinone oxidoreductase that uses light energy to abstract electrons from H(2)O, generating O(2) and a proton gradient subsequently used for ATP formation. It consists of a core antenna complex that captures photons, and an electron transfer chain that converts photonic excitation into a charge separation. This subunit is found at the monomer-monomer interface and is required for correct PSII assembly and/or dimerization. The protein is Photosystem II reaction center protein L of Synechococcus sp. (strain CC9605).